Reading from the N-terminus, the 414-residue chain is Lysosome-associated membrane glycoprotein 1 (414 aa).

The first 18 residues, 1-18 (MGGAARAVLLGFLQASSS), serve as a signal peptide directing secretion. The first lumenal domain stretch occupies residues 19-181 (FDVRDSTGKV…SANKTECRED (163 aa)). At 19–379 (FDVRDSTGKV…EECQLDENNM (361 aa)) the chain is on the lumenal side. A disulfide bridge connects residues Cys29 and Cys67. Asn33, Asn58, Asn71, Asn90, Asn108, Asn117, Asn154, Asn159, Asn168, and Asn174 each carry an N-linked (GlcNAc...) asparagine glycan. Residues Cys142 and Cys178 are joined by a disulfide bond. Residues 182–224 (MVSTTTVAPTTPKHATSQVPTTSPAPTAAPSSPAVGKYNVTGA) form a hinge region. Residues 186–213 (TTVAPTTPKHATSQVPTTSPAPTAAPSS) form a disordered region. Residues 196-213 (ATSQVPTTSPAPTAAPSS) show a composition bias toward low complexity. N-linked (GlcNAc...) asparagine glycosylation is found at Asn220, Asn225, Asn238, Asn259, Asn289, Asn301, and Asn319. The second lumenal domain stretch occupies residues 225-379 (NGTCVLASMG…EECQLDENNM (155 aa)). Cysteines 228 and 266 form a disulfide. Cys335 and Cys372 form a disulfide bridge. Residues 380-403 (LIPIIVGAALAGLVLIVLIAYLIG) traverse the membrane as a helical segment. The Cytoplasmic portion of the chain corresponds to 404–414 (RKRSHAGYQTI).

The protein belongs to the LAMP family.

Its subcellular location is the lysosome membrane. The protein resides in the endosome membrane. It localises to the late endosome membrane. It is found in the cell membrane. The protein localises to the cytolytic granule membrane. Functionally, lysosomal membrane glycoprotein which plays an important role in lysosome biogenesis, lysosomal pH regulation, autophagy and cholesterol homeostasis. Its function is as follows. (Microbial infection) Plays an essential role in efficient replication and spread of Marek's disease virus, by facilitating viral cell-to-cell spread. This is Lysosome-associated membrane glycoprotein 1 (LAMP1) from Gallus gallus (Chicken).